A 316-amino-acid chain; its full sequence is Ornithine carbamoyltransferase (316 aa).

Residues Ser57 to Thr60, Gln84, Arg108, and His135 to Gln138 each bind carbamoyl phosphate. L-ornithine is bound by residues Asn166, Asp230, and Ser234–Met235. Carbamoyl phosphate-binding positions include Cys269–Leu270 and Arg297.

It belongs to the aspartate/ornithine carbamoyltransferase superfamily. OTCase family.

It is found in the cytoplasm. It carries out the reaction carbamoyl phosphate + L-ornithine = L-citrulline + phosphate + H(+). It participates in amino-acid degradation; L-arginine degradation via ADI pathway; carbamoyl phosphate from L-arginine: step 2/2. Its function is as follows. Reversibly catalyzes the transfer of the carbamoyl group from carbamoyl phosphate (CP) to the N(epsilon) atom of ornithine (ORN) to produce L-citrulline. The sequence is that of Ornithine carbamoyltransferase from Bacillus anthracis (strain CDC 684 / NRRL 3495).